Reading from the N-terminus, the 61-residue chain is UPF0434 protein PSPTO_3844 (61 aa).

The protein belongs to the UPF0434 family.

The chain is UPF0434 protein PSPTO_3844 from Pseudomonas syringae pv. tomato (strain ATCC BAA-871 / DC3000).